Consider the following 447-residue polypeptide: Probable rhamnogalacturonase C (447 aa).

Positions 1–19 (MQVKLFYTLALWAPILVSA) are cleaved as a signal peptide. Residues asparagine 37 and asparagine 65 are each glycosylated (N-linked (GlcNAc...) asparagine). Cysteine 40 and cysteine 66 are joined by a disulfide. Aspartate 217 serves as the catalytic Proton donor. A disulfide bond links cysteine 219 and cysteine 236. N-linked (GlcNAc...) asparagine glycans are attached at residues asparagine 237 and asparagine 252. The active site involves histidine 291. N-linked (GlcNAc...) asparagine glycosylation is present at asparagine 316. Intrachain disulfides connect cysteine 338-cysteine 344 and cysteine 366-cysteine 375.

Belongs to the glycosyl hydrolase 28 family.

It localises to the secreted. In terms of biological role, pectinolytic enzymes consist of four classes of enzymes: pectine lyase, polygalacturonase, pectin methylesterase and rhamnogalacturonase. Hydrolyzes alpha-D-galacturonopyranosyl-(1,2)-alpha-L-rhamnopyranosyl linkages in the backbone of the hairy regions of pectins. In Aspergillus flavus (strain ATCC 200026 / FGSC A1120 / IAM 13836 / NRRL 3357 / JCM 12722 / SRRC 167), this protein is Probable rhamnogalacturonase C (rhgC).